The sequence spans 336 residues: MSEIRTLGEFIVAKQHDFPHASGELSSLIGSIKLAAKIVNREINKAGLVDITGASGDENIQGEQQQKLDIYANDKFKAALENRDQVCGVASEEEDEAVAFNKELNKNAKYVVLMDPLDGSSNIDVNVSVGTIFSIYRRISPIGSPATEEDFLQPGNKQVAAGYIIYGSSTMLVYTTGNGVHGFTYDPSLGVFCLSHEDMKIPQDGNIYSINEGNYIRFPEGVKQYLKYCQEIKPAENRPYTSRYIGSLVADFHRNLLKGGIYLYPSTQAYPNGKLRLLYECNPMAMLIEEAGGKATSGEERILDITPTELHQRVPFFVGSINMVDKVQNFLDEWQD.

Mg(2+) contacts are provided by Glu92, Asp115, Leu117, and Asp118. Substrate is bound by residues 118 to 121 (DGSS), Asn211, Tyr244, 262 to 264 (YLY), and Lys274. Glu280 contributes to the Mg(2+) binding site.

This sequence belongs to the FBPase class 1 family. Homotetramer. The cofactor is Mg(2+).

The protein localises to the cytoplasm. It carries out the reaction beta-D-fructose 1,6-bisphosphate + H2O = beta-D-fructose 6-phosphate + phosphate. Its pathway is carbohydrate biosynthesis; gluconeogenesis. This chain is Fructose-1,6-bisphosphatase class 1, found in Aliivibrio salmonicida (strain LFI1238) (Vibrio salmonicida (strain LFI1238)).